Here is a 387-residue protein sequence, read N- to C-terminus: Radial spoke protein 14 (387 aa).

ARM repeat units follow at residues 24–67, 69–109, 111–150, 154–198, 204–244, 245–286, 289–328, and 330–370; these read KALP…ELLS, PVNH…LLAA, EVGARDLAQHSGLDALAAALEDPSEGVRDEAYGALIEAAR, TRRA…TCTQ, GILS…ALAT, REDA…AITI, EGKYAALESPGGLAGLVSVLDPCHEQLCINAMTAVSNVAE, and PEAR…QCRF.

Belongs to the flagellar radial spoke RSP14 family.

It is found in the cytoplasm. It localises to the cytoskeleton. Its subcellular location is the flagellum axoneme. The chain is Radial spoke protein 14 (RSP14) from Chlamydomonas reinhardtii (Chlamydomonas smithii).